The sequence spans 88 residues: Elongation factor 1-beta (88 aa).

This sequence belongs to the EF-1-beta/EF-1-delta family.

Promotes the exchange of GDP for GTP in EF-1-alpha/GDP, thus allowing the regeneration of EF-1-alpha/GTP that could then be used to form the ternary complex EF-1-alpha/GTP/AAtRNA. The polypeptide is Elongation factor 1-beta (Methanosphaera stadtmanae (strain ATCC 43021 / DSM 3091 / JCM 11832 / MCB-3)).